Consider the following 513-residue polypeptide: ATP synthase subunit alpha (513 aa).

Residue 169–176 (GDRQTGKT) participates in ATP binding.

It belongs to the ATPase alpha/beta chains family. In terms of assembly, F-type ATPases have 2 components, CF(1) - the catalytic core - and CF(0) - the membrane proton channel. CF(1) has five subunits: alpha(3), beta(3), gamma(1), delta(1), epsilon(1). CF(0) has three main subunits: a(1), b(2) and c(9-12). The alpha and beta chains form an alternating ring which encloses part of the gamma chain. CF(1) is attached to CF(0) by a central stalk formed by the gamma and epsilon chains, while a peripheral stalk is formed by the delta and b chains.

It is found in the cell membrane. The enzyme catalyses ATP + H2O + 4 H(+)(in) = ADP + phosphate + 5 H(+)(out). Its function is as follows. Produces ATP from ADP in the presence of a proton gradient across the membrane. The alpha chain is a regulatory subunit. The sequence is that of ATP synthase subunit alpha from Polynucleobacter asymbioticus (strain DSM 18221 / CIP 109841 / QLW-P1DMWA-1) (Polynucleobacter necessarius subsp. asymbioticus).